A 130-amino-acid polypeptide reads, in one-letter code: Small ribosomal subunit protein uS11 (130 aa).

The protein belongs to the universal ribosomal protein uS11 family. As to quaternary structure, part of the 30S ribosomal subunit. Interacts with proteins S7 and S18. Binds to IF-3.

Located on the platform of the 30S subunit, it bridges several disparate RNA helices of the 16S rRNA. Forms part of the Shine-Dalgarno cleft in the 70S ribosome. This Moorella thermoacetica (strain ATCC 39073 / JCM 9320) protein is Small ribosomal subunit protein uS11.